Here is a 97-residue protein sequence, read N- to C-terminus: Serine protease inhibitor Kazal-type 13 (97 aa).

The signal sequence occupies residues 1 to 26 (MKRSGCWHQRMLLSLVLLTWTHVTFS). N-linked (GlcNAc...) asparagine glycosylation occurs at Asn-33. Positions 36–97 (RWPKPPCKMY…IQFVKYGKCE (62 aa)) constitute a Kazal-like domain. 3 disulfides stabilise this stretch: Cys-42–Cys-78, Cys-56–Cys-75, and Cys-64–Cys-96.

The protein localises to the secreted. In terms of biological role, may be a serine protease inhibitor. Essential for sperm maturation and fertility. Inhibits sperm acrosome reaction, protecting sperm from premature reaction. The chain is Serine protease inhibitor Kazal-type 13 (Spink13) from Mus musculus (Mouse).